A 1137-amino-acid chain; its full sequence is Otoancorin (1137 aa).

Positions 1-23 (MSQGPRTCSLLLVLLLSHGGAYQ) are cleaved as a signal peptide. Residues N156, N211, N244, N289, N321, N380, N384, N530, N594, N740, and N798 are each glycosylated (N-linked (GlcNAc...) asparagine). Residues 1095-1115 (HSWQTDPLSSSPTWPASTGSP) are compositionally biased toward polar residues. The segment at 1095-1119 (HSWQTDPLSSSPTWPASTGSPTGEP) is disordered. A lipid anchor (GPI-anchor amidated glycine) is attached at G1113. The propeptide at 1114 to 1137 (SPTGEPASQALWLGCTLLLLTAKS) is removed in mature form.

Belongs to the stereocilin family. In terms of tissue distribution, expressed in the inner ear and vestibule.

It is found in the apical cell membrane. Its subcellular location is the secreted. The protein resides in the extracellular space. It localises to the extracellular matrix. May act as an adhesion molecule. In Mus musculus (Mouse), this protein is Otoancorin (Otoa).